The primary structure comprises 267 residues: Malonyl-[acyl-carrier protein] O-methyltransferase (267 aa).

The protein belongs to the methyltransferase superfamily.

It carries out the reaction malonyl-[ACP] + S-adenosyl-L-methionine = malonyl-[ACP] methyl ester + S-adenosyl-L-homocysteine. Its pathway is cofactor biosynthesis; biotin biosynthesis. Its function is as follows. Converts the free carboxyl group of a malonyl-thioester to its methyl ester by transfer of a methyl group from S-adenosyl-L-methionine (SAM). It allows to synthesize pimeloyl-ACP via the fatty acid synthetic pathway. This Geobacter sulfurreducens (strain ATCC 51573 / DSM 12127 / PCA) protein is Malonyl-[acyl-carrier protein] O-methyltransferase.